Consider the following 319-residue polypeptide: Very-long-chain 3-oxoacyl-CoA reductase-A (319 aa).

Residues 17–37 (LFWVGALITASLALYVVYKTI) form a helical membrane-spanning segment. 56–85 (GKWAVVTGATDGIGKSYAEELARRGFSMML) contributes to the NADP(+) binding site. Helical transmembrane passes span 188–208 (GVIL…LTIY) and 282–302 (AVMG…NLGL). Residue Ser195 participates in substrate binding. Tyr208 functions as the Proton acceptor in the catalytic mechanism.

Belongs to the short-chain dehydrogenases/reductases (SDR) family. 17-beta-HSD 3 subfamily.

It localises to the endoplasmic reticulum membrane. It catalyses the reaction a very-long-chain (3R)-3-hydroxyacyl-CoA + NADP(+) = a very-long-chain 3-oxoacyl-CoA + NADPH + H(+). The catalysed reaction is 17beta-estradiol + NAD(+) = estrone + NADH + H(+). The enzyme catalyses 17beta-estradiol + NADP(+) = estrone + NADPH + H(+). Its pathway is lipid metabolism; fatty acid biosynthesis. The protein operates within steroid biosynthesis; estrogen biosynthesis. In terms of biological role, catalyzes the second of the four reactions of the long-chain fatty acids elongation cycle. This endoplasmic reticulum-bound enzymatic process, allows the addition of two carbons to the chain of long- and very long-chain fatty acids/VLCFAs per cycle. This enzyme has a 3-ketoacyl-CoA reductase activity, reducing 3-ketoacyl-CoA to 3-hydroxyacyl-CoA, within each cycle of fatty acid elongation. Thereby, it may participate in the production of VLCFAs of different chain lengths that are involved in multiple biological processes as precursors of membrane lipids and lipid mediators. May also catalyze the transformation of estrone (E1) into estradiol (E2) and play a role in estrogen formation. In Danio rerio (Zebrafish), this protein is Very-long-chain 3-oxoacyl-CoA reductase-A (hsd17b12a).